The following is a 524-amino-acid chain: 11-oxo-beta-amyrin 30-oxidase (524 aa).

The chain crosses the membrane as a helical span at residues 9-29 (GTTVIISVLSVLLAVIPWYLL). Cys472 is a heme binding site.

It belongs to the cytochrome P450 family. Heme serves as cofactor. Expressed in flowers. Detected in roots upon salt treatment.

Its subcellular location is the membrane. It catalyses the reaction 11-oxo-beta-amyrin + 3 reduced [NADPH--hemoprotein reductase] + 3 O2 = glycyrrhetinate + 3 oxidized [NADPH--hemoprotein reductase] + 4 H2O + 4 H(+). Involved in the biosynthesis of triterpenoid saponins. Catalyzes three sequential oxidation steps at C-30 of 11-oxo-beta-amyrin. Also able to catalyze sequential C-30 hydroxylation of beta-amyrin to produce 30-hydroxy-beta-amyrin and 11-deoxoglycyrrhetinic acid. The protein is 11-oxo-beta-amyrin 30-oxidase (CYP72A63) of Medicago truncatula (Barrel medic).